The following is a 315-amino-acid chain: MQIKLANPRGFCAGVDRAIEIVNRALEVFGPPIYVRHEVVHNKFVVEDLRSRGAIFVEELDQVPDDVIVIFSAHGVSQAVRTEAAGRGLKVFDATCPLVTKVHIEVARYSRDGRECILIGHAGHPEVEGTMGQYDAANGGAIYLVEDEEDVASLQVRNPEALAFVTQTTLSMDDTSRVIDALRKRFPAIGGPRKDDICYATQNRQDAVKQLADECDVVLVVGSPNSSNSNRLRELAERMATPAYLIDGAEDMQQGWFDGVERIGITAGASAPEVLVRGVIQQLQAWGATGADELAGREENITFSMPKELRVKSLL.

A [4Fe-4S] cluster-binding site is contributed by cysteine 12. Residues histidine 41 and histidine 74 each contribute to the (2E)-4-hydroxy-3-methylbut-2-enyl diphosphate site. Dimethylallyl diphosphate is bound by residues histidine 41 and histidine 74. 2 residues coordinate isopentenyl diphosphate: histidine 41 and histidine 74. Position 96 (cysteine 96) interacts with [4Fe-4S] cluster. Histidine 124 is a binding site for (2E)-4-hydroxy-3-methylbut-2-enyl diphosphate. Histidine 124 serves as a coordination point for dimethylallyl diphosphate. Position 124 (histidine 124) interacts with isopentenyl diphosphate. Glutamate 126 acts as the Proton donor in catalysis. A (2E)-4-hydroxy-3-methylbut-2-enyl diphosphate-binding site is contributed by threonine 168. Residue cysteine 198 coordinates [4Fe-4S] cluster. (2E)-4-hydroxy-3-methylbut-2-enyl diphosphate contacts are provided by serine 226, serine 227, asparagine 228, and serine 270. Dimethylallyl diphosphate-binding residues include serine 226, serine 227, asparagine 228, and serine 270. Serine 226, serine 227, asparagine 228, and serine 270 together coordinate isopentenyl diphosphate.

This sequence belongs to the IspH family. [4Fe-4S] cluster serves as cofactor.

It carries out the reaction isopentenyl diphosphate + 2 oxidized [2Fe-2S]-[ferredoxin] + H2O = (2E)-4-hydroxy-3-methylbut-2-enyl diphosphate + 2 reduced [2Fe-2S]-[ferredoxin] + 2 H(+). The catalysed reaction is dimethylallyl diphosphate + 2 oxidized [2Fe-2S]-[ferredoxin] + H2O = (2E)-4-hydroxy-3-methylbut-2-enyl diphosphate + 2 reduced [2Fe-2S]-[ferredoxin] + 2 H(+). The protein operates within isoprenoid biosynthesis; dimethylallyl diphosphate biosynthesis; dimethylallyl diphosphate from (2E)-4-hydroxy-3-methylbutenyl diphosphate: step 1/1. Its pathway is isoprenoid biosynthesis; isopentenyl diphosphate biosynthesis via DXP pathway; isopentenyl diphosphate from 1-deoxy-D-xylulose 5-phosphate: step 6/6. Its function is as follows. Catalyzes the conversion of 1-hydroxy-2-methyl-2-(E)-butenyl 4-diphosphate (HMBPP) into a mixture of isopentenyl diphosphate (IPP) and dimethylallyl diphosphate (DMAPP). Acts in the terminal step of the DOXP/MEP pathway for isoprenoid precursor biosynthesis. The chain is 4-hydroxy-3-methylbut-2-enyl diphosphate reductase from Pseudomonas syringae pv. syringae (strain B728a).